The following is a 274-amino-acid chain: Large ribosomal subunit protein uL2 (274 aa).

The interval His-200–Lys-274 is disordered. Basic residues-rich tracts occupy residues Lys-207–Asn-220 and Leu-255–Lys-274.

It belongs to the universal ribosomal protein uL2 family. Part of the 50S ribosomal subunit. Forms a bridge to the 30S subunit in the 70S ribosome.

Its function is as follows. One of the primary rRNA binding proteins. Required for association of the 30S and 50S subunits to form the 70S ribosome, for tRNA binding and peptide bond formation. It has been suggested to have peptidyltransferase activity; this is somewhat controversial. Makes several contacts with the 16S rRNA in the 70S ribosome. The polypeptide is Large ribosomal subunit protein uL2 (Parabacteroides distasonis (strain ATCC 8503 / DSM 20701 / CIP 104284 / JCM 5825 / NCTC 11152)).